Reading from the N-terminus, the 318-residue chain is CRISPR-associated protein Cas7/Csa2 1 (318 aa).

This sequence belongs to the CRISPR-associated protein Cas7/Cst2/DevR family. Subtype I-a/Apern subfamily. As to quaternary structure, part of the aCascade ribonucleoprotein complex, minimally composed of Csa2 and Cas5a, which binds crRNA. Other possible components of aCascade in strain P1 are Cas6b (SSO1437) and Csa5 (SSO1443), while SSO1399, Cas5b (SSO1400) and SSO1401 have sometimes been seen weakly associated. Csa2 is probably the major RNA-binding subunit. The Csa2-Cas5a-crRNA complex also binds target DNA homologous to crRNA, probably forming an R-loop. Purified aCascade forms a filament about 6 nm in width.

Its function is as follows. CRISPR (clustered regularly interspaced short palindromic repeat) is an adaptive immune system that provides protection against mobile genetic elements (viruses, transposable elements and conjugative plasmids). CRISPR clusters contain spacers, sequences complementary to antecedent mobile elements, and target invading nucleic acids. CRISPR clusters are transcribed and processed into CRISPR RNA (crRNA). The sequence is that of CRISPR-associated protein Cas7/Csa2 1 (cas7a) from Saccharolobus solfataricus (strain ATCC 35092 / DSM 1617 / JCM 11322 / P2) (Sulfolobus solfataricus).